Reading from the N-terminus, the 255-residue chain is Imidazole glycerol phosphate synthase subunit HisF (255 aa).

Residues aspartate 11 and aspartate 130 contribute to the active site.

The protein belongs to the HisA/HisF family. As to quaternary structure, heterodimer of HisH and HisF.

Its subcellular location is the cytoplasm. The catalysed reaction is 5-[(5-phospho-1-deoxy-D-ribulos-1-ylimino)methylamino]-1-(5-phospho-beta-D-ribosyl)imidazole-4-carboxamide + L-glutamine = D-erythro-1-(imidazol-4-yl)glycerol 3-phosphate + 5-amino-1-(5-phospho-beta-D-ribosyl)imidazole-4-carboxamide + L-glutamate + H(+). Its pathway is amino-acid biosynthesis; L-histidine biosynthesis; L-histidine from 5-phospho-alpha-D-ribose 1-diphosphate: step 5/9. IGPS catalyzes the conversion of PRFAR and glutamine to IGP, AICAR and glutamate. The HisF subunit catalyzes the cyclization activity that produces IGP and AICAR from PRFAR using the ammonia provided by the HisH subunit. This is Imidazole glycerol phosphate synthase subunit HisF from Rhodopseudomonas palustris (strain BisB5).